Reading from the N-terminus, the 276-residue chain is MGTDTVMSGRVRKDLSKTNPNGNIPENRSNSRKKIQRRSKKTLICPVQKLFDTCKKVFADGKSGTVPSQENIEMLRAVLDEIKPEDVGVNPKMSYFRSTVTGRSPLVTYLHIYACHRFSICIFCLPPSGVIPLHNHPEMTVFSKLLFGTMHIKSYDWVPDSPQPSSDTRLAKVKVDSDFTAPCDTSILYPADGGNMHCFTAKTACAVLDVIGPPYSDPAGRHCTYYFDYPFSSFSVDGVVVAEEEKEGYAWLKEREEKPEDLTVTALMYSGPTIKE.

A disordered region spans residues 1–40; the sequence is MGTDTVMSGRVRKDLSKTNPNGNIPENRSNSRKKIQRRSK. Residues 17–28 show a composition bias toward polar residues; sequence KTNPNGNIPENR. A compositionally biased stretch (basic residues) spans 30 to 40; it reads NSRKKIQRRSK. Positions 134, 136, and 197 each coordinate Fe cation.

This sequence belongs to the cysteine dioxygenase family. The cofactor is Fe(2+).

The protein resides in the nucleus. Its subcellular location is the cytoplasm. It catalyses the reaction L-cysteine + O2 = 3-sulfino-L-alanine + H(+). Functionally, catalyzes the oxidation of N-terminal cysteine residues (N-Cys), thus preparing the protein for N-end rule pathway-mediated proteasomal degradation, upstream of the N-end rule enzymes ATE1, ATE2 and PRT6. Controls the preparation of the group VII ethylene response factor (ERF-VII) proteins for degradation via the 26S proteasome N-end rule pathway. Acts as an oxygen sensor that controls the stability of ERF-VII proteins, which are stabilized in flooding-induced hypoxia, and regulate transcriptional adaptation to these adverse conditions. Not active on Cys located inside or at the C-terminus of a peptide. Acts redundantly with PCO1 to repress the anaerobic response. In Arabidopsis thaliana (Mouse-ear cress), this protein is Plant cysteine oxidase 2.